Consider the following 65-residue polypeptide: Lantipeptide Flvbeta.h (65 aa).

Positions 1–27 (MERYGHLAGVIPVDEIDDMFESNVIGG) are cleaved as a propeptide — cleaved by FlvT. 2,3-didehydrobutyrine; by FlvM2 is present on Thr28. A cross-link (lanthionine (Ser-Cys); by FlvM2) is located at residues 29–33 (SSIDC). A 2,3-didehydroalanine (Ser); by FlvM2 modification is found at Ser30. Residue Thr44 is modified to 2,3-didehydrobutyrine; by FlvM2. The segment at residues 48-54 (TVRIEFC) is a cross-link (beta-methyllanthionine (Thr-Cys); by FlvM2). Positions 56–59 (SAAC) form a cross-link, lanthionine (Ser-Cys); by FlvM2. The beta-methyllanthionine (Thr-Cys); by FlvM2 cross-link spans 60 to 63 (TYSC).

Post-translationally, contains LL-lanthionine, DL-lanthionine, and DL-beta-methyllanthionine, when coepressed in E.coli with the flavecin synthetase FlvM2.

Its subcellular location is the secreted. In terms of biological role, lanthionine-containing peptide that does probably not show antibacterial activity, since its analog [+2]Flvbeta.h does not show antibacterial activity against M.luteus. Also does not show antibiotic activity when tested with [Del2]Flvalpha.a, an analog of Flvalpha.a, which is encoded by the same operon than Flvbeta.h. The bactericidal activity of lantibiotics is based on depolarization of energized bacterial cytoplasmic membranes, initiated by the formation of aqueous transmembrane pores. This chain is Lantipeptide Flvbeta.h, found in Ruminococcus flavefaciens.